The sequence spans 193 residues: MSLENLQLDIKVFGKWDTKVEIRDPSLKKYISLMPVYLPHTGGRHEHRRFGKAKVPIVERLINQIMRPGRNKGKKHLAYNIVKLAFDIIYLKTGQNPIQVLVRAIENSAPREEVTRIMYGGIVYYVAVDVSPQRRIDLALRHIATGAKDASFNNPKPIEEVLAEEIIAAANNDSKSFAIKRKEEIERIALSSR.

The protein belongs to the universal ribosomal protein uS7 family. Part of the 30S ribosomal subunit.

Its function is as follows. One of the primary rRNA binding proteins, it binds directly to 16S rRNA where it nucleates assembly of the head domain of the 30S subunit. Is located at the subunit interface close to the decoding center. This chain is Small ribosomal subunit protein uS7, found in Saccharolobus solfataricus (strain ATCC 35092 / DSM 1617 / JCM 11322 / P2) (Sulfolobus solfataricus).